Reading from the N-terminus, the 188-residue chain is Probable DNA-directed RNA polymerase subunit delta (188 aa).

Residues Leu-14 to Trp-81 form the HTH HARE-type domain. The interval Glu-96–Asp-188 is disordered. Composition is skewed to acidic residues over residues Ile-118–Asp-150 and Glu-158–Asp-188.

This sequence belongs to the RpoE family. As to quaternary structure, RNAP is composed of a core of 2 alpha, a beta and a beta' subunits. The core is associated with a delta subunit and one of several sigma factors.

Its function is as follows. Participates in both the initiation and recycling phases of transcription. In the presence of the delta subunit, RNAP displays an increased specificity of transcription, a decreased affinity for nucleic acids, and an increased efficiency of RNA synthesis because of enhanced recycling. The sequence is that of Probable DNA-directed RNA polymerase subunit delta from Lactococcus lactis subsp. cremoris (strain MG1363).